We begin with the raw amino-acid sequence, 239 residues long: Small ribosomal subunit protein uS3c (239 aa).

A KH type-2 domain is found at 43–139; it reads IKNYIQKNRK…RLNISIEKVK (97 aa). The tract at residues 50–80 is disordered; it reads NRKKGSNRKIESDSSSEVITHNRKTDSGSSS.

It belongs to the universal ribosomal protein uS3 family. As to quaternary structure, part of the 30S ribosomal subunit.

The protein localises to the plastid. It localises to the chloroplast. This chain is Small ribosomal subunit protein uS3c (rps3), found in Agrostis stolonifera (Creeping bentgrass).